The primary structure comprises 303 residues: MQMYPVEQAALVELEAGLARREAAQPAAEAPRKAGGVALHVRQVVKRYDGREVLHNVALDVAPGEFLAIVGRSGCGKSTLLRLVAGLEAADGGSITVDGESAAKGRARHADVRVMFQDARLLPWKRVLDNVALGLPRTRRGEAADVLAQVGLADRAREWPARLSGGQRQRVALARALVHHPQLLLLDEPLGALDALTRIEMQGLIESLWRRLGFTALLVTHDVSEAVALADRIVLIEDGRIAMDERVALARPRERGAAGFAQLEAAVLKRVMRQAPQAQVPSHAGAHADPAATTAPLNVSWAA.

In terms of domain architecture, ABC transporter spans 39–263 (LHVRQVVKRY…ERGAAGFAQL (225 aa)). Residue 71-78 (GRSGCGKS) coordinates ATP.

Belongs to the ABC transporter superfamily. Aliphatic sulfonates importer (TC 3.A.1.17.2) family. The complex is composed of two ATP-binding proteins (SsuB), two transmembrane proteins (SsuC) and a solute-binding protein (SsuA).

Its subcellular location is the cell inner membrane. The catalysed reaction is ATP + H2O + aliphatic sulfonate-[sulfonate-binding protein]Side 1 = ADP + phosphate + aliphatic sulfonateSide 2 + [sulfonate-binding protein]Side 1.. In terms of biological role, part of the ABC transporter complex SsuABC involved in aliphatic sulfonates import. Responsible for energy coupling to the transport system. This is Aliphatic sulfonates import ATP-binding protein SsuB from Cupriavidus necator (strain ATCC 17699 / DSM 428 / KCTC 22496 / NCIMB 10442 / H16 / Stanier 337) (Ralstonia eutropha).